A 495-amino-acid chain; its full sequence is Aspartyl/glutamyl-tRNA(Asn/Gln) amidotransferase subunit B (495 aa).

It belongs to the GatB/GatE family. GatB subfamily. As to quaternary structure, heterotrimer of A, B and C subunits.

It catalyses the reaction L-glutamyl-tRNA(Gln) + L-glutamine + ATP + H2O = L-glutaminyl-tRNA(Gln) + L-glutamate + ADP + phosphate + H(+). The catalysed reaction is L-aspartyl-tRNA(Asn) + L-glutamine + ATP + H2O = L-asparaginyl-tRNA(Asn) + L-glutamate + ADP + phosphate + 2 H(+). Allows the formation of correctly charged Asn-tRNA(Asn) or Gln-tRNA(Gln) through the transamidation of misacylated Asp-tRNA(Asn) or Glu-tRNA(Gln) in organisms which lack either or both of asparaginyl-tRNA or glutaminyl-tRNA synthetases. The reaction takes place in the presence of glutamine and ATP through an activated phospho-Asp-tRNA(Asn) or phospho-Glu-tRNA(Gln). This chain is Aspartyl/glutamyl-tRNA(Asn/Gln) amidotransferase subunit B, found in Gloeothece citriformis (strain PCC 7424) (Cyanothece sp. (strain PCC 7424)).